A 455-amino-acid chain; its full sequence is Elongation factor Tu, mitochondrial (455 aa).

The N-terminal 46 residues, 1–46, are a transit peptide targeting the mitochondrion; the sequence is MTTMAAATLLRATPHFSGLAAGRTFLLQGLLRLLKAPALPLLCRGL. A tr-type G domain is found at 58–254; sequence KPHVNVGTIG…AVDTYIPVPA (197 aa). The segment at 67-74 is G1; it reads GHVDHGKT. Aspartate 70, glycine 72, lysine 73, threonine 74, and threonine 75 together coordinate GTP. Residue threonine 74 participates in Mg(2+) binding. Lysine 82 carries the N6-acetyllysine modification. The residue at position 91 (lysine 91) is an N6-acetyllysine; alternate. Lysine 91 is modified (N6-succinyllysine; alternate). Residues 108–112 form a G2 region; it reads GITIN. Positions 129–132 are G3; sequence DCPG. GTP is bound by residues asparagine 184, aspartate 187, serine 222, alanine 223, and leucine 224. Positions 184 to 187 are G4; that stretch reads NKAD. The G5 stretch occupies residues 222-224; it reads SAL. Lysine 237 is subject to N6-succinyllysine. Lysine 259 carries the N6-acetyllysine modification. Threonine 281 is subject to Phosphothreonine. Position 289 is an N6-succinyllysine (lysine 289). Serine 315 bears the Phosphoserine mark. N6-acetyllysine is present on residues lysine 364 and lysine 421.

The protein belongs to the TRAFAC class translation factor GTPase superfamily. Classic translation factor GTPase family. EF-Tu/EF-1A subfamily. In terms of assembly, interacts with NLRX1. Interacts with ATG16L1. As to quaternary structure, (Microbial infection) Interacts with human parainfluenza virus 3 matrix protein; this interaction inhibits RLR-mediated type I interferon production while promoting autophagy. (Microbial infection) Interacts with Hantaan hantavirus glycoprotein N; this interaction contributes to the virus-induced degradation of mitochondria by autophagy, which leads to degradation of MAVS and inhibition of type I interferon (IFN) responses.

The protein resides in the mitochondrion. It catalyses the reaction GTP + H2O = GDP + phosphate + H(+). GTP hydrolase that promotes the GTP-dependent binding of aminoacyl-tRNA to the A-site of ribosomes during protein biosynthesis. Also plays a role in the regulation of autophagy and innate immunity. Recruits ATG5-ATG12 and NLRX1 at mitochondria and serves as a checkpoint of the RIGI-MAVS pathway. In turn, inhibits RLR-mediated type I interferon while promoting autophagy. This Homo sapiens (Human) protein is Elongation factor Tu, mitochondrial (TUFM).